The following is a 466-amino-acid chain: UDP-N-acetylglucosamine--dolichyl-phosphate N-acetylglucosaminephosphotransferase (466 aa).

The chain crosses the membrane as a helical span at residues 12-32; sequence AAFAVAAHAPVLGLILLGSIV. Asp-57 is a binding site for UDP-N-acetyl-alpha-D-glucosamine. A glycan (N-linked (GlcNAc...) asparagine) is linked at Asn-59. Glu-90 serves as a coordination point for UDP-N-acetyl-alpha-D-glucosamine. 2 consecutive transmembrane segments (helical) span residues 91-111 and 124-144; these read SLGI…TVCL and PYAS…LGFV. Lys-155 is a binding site for dolichyl phosphate. 2 consecutive transmembrane segments (helical) span residues 156-176 and 236-256; these read IILT…SLSV and GAAL…LCIF. 255-263 is a binding site for dolichyl phosphate; the sequence is IFCTNSINI. Residue Asn-262 participates in Mg(2+) binding. The next 4 helical transmembrane spans lie at 263–283, 316–336, 345–365, and 374–394; these read ILAG…VASV, DHQL…LALW, VFVG…SSIT, and LFFA…FSIV. Asn-268 is a UDP-N-acetyl-alpha-D-glucosamine binding site. Position 349 (Asp-349) interacts with Mg(2+). A UDP-N-acetyl-alpha-D-glucosamine-binding site is contributed by 398 to 400; sequence RHR. A glycan (N-linked (GlcNAc...) asparagine) is linked at Asn-416. A helical transmembrane segment spans residues 442–462; the sequence is CQVIACVLGFVVRYVLSAFLY.

This sequence belongs to the glycosyltransferase 4 family. The cofactor is Mg(2+).

The protein localises to the endoplasmic reticulum membrane. It carries out the reaction a di-trans,poly-cis-dolichyl phosphate + UDP-N-acetyl-alpha-D-glucosamine = an N-acetyl-alpha-D-glucosaminyl-diphospho-di-trans,poly-cis-dolichol + UMP. Its pathway is protein modification; protein glycosylation. With respect to regulation, inhibited by natural nucleoside antibiotic tunicamycin, which acts as a structural analog and competitor of UDP-GlcNAc. Its function is as follows. UDP-N-acetylglucosamine--dolichyl-phosphate N-acetylglucosaminephosphotransferase that operates in the biosynthetic pathway of dolichol-linked oligosaccharides, the glycan precursors employed in protein asparagine (N)-glycosylation. The assembly of dolichol-linked oligosaccharides begins on the cytosolic side of the endoplasmic reticulum membrane and finishes in its lumen. The sequential addition of sugars to dolichol pyrophosphate produces dolichol-linked oligosaccharides containing fourteen sugars, including two GlcNAcs, nine mannoses and three glucoses. Once assembled, the oligosaccharide is transferred from the lipid to nascent proteins by oligosaccharyltransferases. Catalyzes the initial step of dolichol-linked oligosaccharide biosynthesis, transfering GlcNAc-1-P from cytosolic UDP-GlcNAc onto the carrier lipid dolichyl phosphate (P-dolichol), yielding GlcNAc-P-P-dolichol embedded in the cytoplasmic leaflet of the endoplasmic reticulum membrane. In Leishmania amazonensis, this protein is UDP-N-acetylglucosamine--dolichyl-phosphate N-acetylglucosaminephosphotransferase (NAGT).